The primary structure comprises 53 residues: Metallocarboxypeptidase inhibitor b (53 aa).

3 cysteine pairs are disulfide-bonded: Cys9-Cys23, Cys15-Cys51, and Cys27-Cys38. A Zn(2+)-binding site is contributed by Ala53.

Metallocarboxypeptidase inhibitor. Has an inhibitory effect on bovine CPA1 and porcine CPB1. Does not inhibit D.melanogaster svr (carboxypeptidase D). Shows no activity against serine proteases subtilisin or bovine trypsin, cysteine protease papain, and aspartyl protease porcine pepsin. The sequence is that of Metallocarboxypeptidase inhibitor b from Nerita versicolor (Four-tooth nerite).